Consider the following 585-residue polypeptide: Glutamine--tRNA ligase (585 aa).

Positions 51-61 match the 'HIGH' region motif; the sequence is PEPNGYLHIGH. ATP contacts are provided by residues 52-54 and 58-64; these read EPN and HIGHAKS. L-glutamine contacts are provided by D84 and Y238. ATP contacts are provided by residues T257 and 292 to 293; that span reads RL. The 'KMSKS' region signature appears at 299-303; sequence ITSKR.

It belongs to the class-I aminoacyl-tRNA synthetase family. In terms of assembly, monomer.

The protein resides in the cytoplasm. It carries out the reaction tRNA(Gln) + L-glutamine + ATP = L-glutaminyl-tRNA(Gln) + AMP + diphosphate. The chain is Glutamine--tRNA ligase from Cupriavidus taiwanensis (strain DSM 17343 / BCRC 17206 / CCUG 44338 / CIP 107171 / LMG 19424 / R1) (Ralstonia taiwanensis (strain LMG 19424)).